The sequence spans 669 residues: Thrombospondin-type laminin G domain and EAR repeat-containing protein (669 aa).

The first 19 residues, 1–19 (MSALLSLCFVLPLAAPGHG), serve as a signal peptide directing secretion. Residues 58 to 277 (GLQLSVAAPR…RVTLGPQPPC (220 aa)) form the Laminin G-like domain. EAR repeat units follow at residues 313 to 358 (DYVE…KWTE), 360 to 408 (KFVS…KWSH), 412 to 460 (KFTP…KWNP), 464 to 506 (LFEA…VHSH), 514 to 570 (SFQL…ELNV), 574 to 622 (AFVK…RWQG), and 625 to 668 (GFVA…RLRT). Residue Asn-320 is glycosylated (N-linked (GlcNAc...) asparagine). N-linked (GlcNAc...) asparagine glycans are attached at residues Asn-468, Asn-497, Asn-556, and Asn-569.

It is found in the secreted. Its subcellular location is the cell surface. The protein localises to the cell projection. The protein resides in the stereocilium. Plays a critical role in tooth and hair follicle morphogenesis through regulation of the Notch signaling pathway. May play a role in development or function of the auditory system. The protein is Thrombospondin-type laminin G domain and EAR repeat-containing protein (TSPEAR) of Homo sapiens (Human).